The following is a 548-amino-acid chain: Palmitoyltransferase pfa3 (548 aa).

Residues 1–32 (MMATLATSPPTSPTWPKRRPRAWALRCERYCC) lie on the Cytoplasmic side of the membrane. A helical membrane pass occupies residues 33–53 (AAATYFPLAFVYSLTTWAVYV). The Extracellular segment spans residues 54-70 (EASIGLKPSRSPWIGLP). The chain crosses the membrane as a helical span at residues 71-91 (TSILGVLLYICLNASYTVAVF). At 92-173 (TDPGSPLTTG…ATCVGLYNYK (82 aa)) the chain is on the cytoplasmic side. Residues 130–180 (RYCKKCQCPKPDRAHHCSTCKRCVLKMDHHCPWLATCVGLYNYKAFLLFLI) enclose the DHHC domain. The helical transmembrane segment at 174–194 (AFLLFLIYTSLFCWVDFAVSA) threads the bilayer. Over 195–215 (TWIWTEVFNDAPYLETMLPVN) the chain is Extracellular. Residues 216–236 (VVLLAILGGIIGLVLTGFTAW) form a helical membrane-spanning segment. Residues 237-548 (HISLAVRGMT…EDSSEWRDWD (312 aa)) lie on the Cytoplasmic side of the membrane. Disordered regions lie at residues 313–339 (RAEEGEERLSPAPEQPASHGVSDDQLT) and 463–548 (NPHQ…RDWD). The span at 508-535 (DPLNQQSVPANGAVNQLQKANEASSATT) shows a compositional bias: polar residues. Positions 536–548 (NRREDSSEWRDWD) are enriched in basic and acidic residues.

The protein belongs to the DHHC palmitoyltransferase family. PFA3 subfamily. In terms of processing, autopalmitoylated.

Its subcellular location is the vacuole membrane. The enzyme catalyses L-cysteinyl-[protein] + hexadecanoyl-CoA = S-hexadecanoyl-L-cysteinyl-[protein] + CoA. Palmitoyltransferase specific for VAC8. Palmitoylates VAC8 at one or more of its N-terminal cysteine residues, which is required for its proper membrane localization. This is Palmitoyltransferase pfa3 (pfa3) from Aspergillus fumigatus (strain ATCC MYA-4609 / CBS 101355 / FGSC A1100 / Af293) (Neosartorya fumigata).